Here is a 312-residue protein sequence, read N- to C-terminus: Ribonuclease Z (312 aa).

Zn(2+) is bound by residues His63, His65, Asp67, His68, His141, Asp212, and His270. The active-site Proton acceptor is the Asp67.

It belongs to the RNase Z family. In terms of assembly, homodimer. Zn(2+) serves as cofactor.

The enzyme catalyses Endonucleolytic cleavage of RNA, removing extra 3' nucleotides from tRNA precursor, generating 3' termini of tRNAs. A 3'-hydroxy group is left at the tRNA terminus and a 5'-phosphoryl group is left at the trailer molecule.. In terms of biological role, zinc phosphodiesterase, which displays some tRNA 3'-processing endonuclease activity. Probably involved in tRNA maturation, by removing a 3'-trailer from precursor tRNA. The protein is Ribonuclease Z of Lactobacillus acidophilus (strain ATCC 700396 / NCK56 / N2 / NCFM).